The primary structure comprises 226 residues: MKYKNIKRGIFIERPNRFIAHVEIDSVTEICHVKNTGRCKELLIPGTVVYIQKSDNPKRKTGFDLISVIKGSRHINMDSQAPNKLVQEWMEKGNLFSGITLVKAESRYKNSRFDFYVETKEDKIFIEVKGVTLEENNIAMFPDAPTERGVRHIKELCDSLHDGYKAYIIFVIQMKDVDYFIPNETTHREFSDALKSAYRKGVNILALDCVVEEGFIEIEKQVEVRL.

The protein belongs to the SfsA family.

This is Sugar fermentation stimulation protein homolog from Ruminiclostridium cellulolyticum (strain ATCC 35319 / DSM 5812 / JCM 6584 / H10) (Clostridium cellulolyticum).